The chain runs to 505 residues: Lysine--tRNA ligase (505 aa).

Residues Glu-415 and Glu-422 each coordinate Mg(2+).

This sequence belongs to the class-II aminoacyl-tRNA synthetase family. Homodimer. It depends on Mg(2+) as a cofactor.

It is found in the cytoplasm. The catalysed reaction is tRNA(Lys) + L-lysine + ATP = L-lysyl-tRNA(Lys) + AMP + diphosphate. In Xanthomonas axonopodis pv. citri (strain 306), this protein is Lysine--tRNA ligase.